The sequence spans 126 residues: FCS-Like Zinc finger 17 (126 aa).

The FLZ-type zinc finger occupies 41–85 (CFLKTCHLCNKQLHQDKDVYMYRGDLGFCSRECRESQMLIDDRKE).

Belongs to the FLZ family. Interacts with KIN10 and KIN11 via its FLZ-type zinc finger domain. Forms heterodimer with FLZ2 in vitro.

It localises to the nucleus. Its subcellular location is the cytoplasm. In terms of biological role, may act as an adapter to facilitate the interaction of SnRK1 complex with effector proteins, conferring tissue- and stimulus-type specific differences in the SnRK1 regulation pathway. The sequence is that of FCS-Like Zinc finger 17 from Arabidopsis thaliana (Mouse-ear cress).